The primary structure comprises 665 residues: Methionine--tRNA ligase (665 aa).

Positions 13-23 match the 'HIGH' region motif; that stretch reads YYPSGKLHIGS. The short motif at 309 to 313 is the 'KMSKS' region element; sequence KMSKS. Lys-312 lines the ATP pocket. Positions 562 to 665 constitute a tRNA-binding domain; the sequence is DFDKVEIRVA…PAVPNGSVIG (104 aa).

The protein belongs to the class-I aminoacyl-tRNA synthetase family. MetG type 2B subfamily. Homodimer.

It is found in the cytoplasm. It catalyses the reaction tRNA(Met) + L-methionine + ATP = L-methionyl-tRNA(Met) + AMP + diphosphate. Is required not only for elongation of protein synthesis but also for the initiation of all mRNA translation through initiator tRNA(fMet) aminoacylation. The polypeptide is Methionine--tRNA ligase (metG) (Streptococcus pneumoniae serotype 4 (strain ATCC BAA-334 / TIGR4)).